The chain runs to 172 residues: Small ribosomal subunit protein uS5 (172 aa).

The S5 DRBM domain occupies 16–79 (LKEKLVHINR…EDGKKNVVKV (64 aa)).

Belongs to the universal ribosomal protein uS5 family. Part of the 30S ribosomal subunit. Contacts proteins S4 and S8.

With S4 and S12 plays an important role in translational accuracy. Its function is as follows. Located at the back of the 30S subunit body where it stabilizes the conformation of the head with respect to the body. This Prosthecochloris aestuarii (strain DSM 271 / SK 413) protein is Small ribosomal subunit protein uS5.